A 376-amino-acid chain; its full sequence is Homeobox protein extradenticle (376 aa).

The disordered stretch occupies residues 16-35 (APQGYSLSGQDDGQNTGNEN). A compositionally biased stretch (polar residues) spans 20–34 (YSLSGQDDGQNTGNE). The PBC domain occupies 38–237 (RKQKDIGEIL…VMILRSRFLD (200 aa)). Residues 45–124 (EILQQIMSIS…EGVAGPEKGG (80 aa)) form a PBC-A region. The segment at 127-237 (AAAASAAAAS…VMILRSRFLD (111 aa)) is PBC-B. The homeobox; TALE-type DNA-binding region spans 238 to 300 (ARRKRRNFSK…NKRIRYKKNI (63 aa)). Low complexity predominate over residues 318 to 335 (ASPYSMAGPPSGTTTPMM). Positions 318-376 (ASPYSMAGPPSGTTTPMMSPAPPQDSMGYTMGSGGYDQQQPYDNSMGGYDPNLHQDLSP) are disordered.

It belongs to the TALE/PBX homeobox family. Interacts with Ubx and hth.

The protein localises to the nucleus. Functionally, transcription factor which acts with the selector homeodomain proteins altering the regulation of downstream target genes such as wingless (wg), teashirt (tsh) and decapentaplegic (dpp), thus affecting segmental identity. Delimits the eye field and prevent inappropriate eye development. Required for proper localization of chordotonal organs within the peripheral nervous system. This Drosophila pseudoobscura pseudoobscura (Fruit fly) protein is Homeobox protein extradenticle.